We begin with the raw amino-acid sequence, 68 residues long: Putative membrane protein insertion efficiency factor (68 aa).

This sequence belongs to the UPF0161 family.

It is found in the cell inner membrane. In terms of biological role, could be involved in insertion of integral membrane proteins into the membrane. The polypeptide is Putative membrane protein insertion efficiency factor (Persephonella marina (strain DSM 14350 / EX-H1)).